The following is a 696-amino-acid chain: DNA-directed RNA polymerase subunit beta' (696 aa).

Zn(2+) is bound by residues cysteine 76, cysteine 78, cysteine 94, and cysteine 97. Mg(2+) is bound by residues aspartate 496, aspartate 498, and aspartate 500.

This sequence belongs to the RNA polymerase beta' chain family. RpoC1 subfamily. In terms of assembly, in plastids the minimal PEP RNA polymerase catalytic core is composed of four subunits: alpha, beta, beta', and beta''. When a (nuclear-encoded) sigma factor is associated with the core the holoenzyme is formed, which can initiate transcription. Mg(2+) serves as cofactor. It depends on Zn(2+) as a cofactor.

Its subcellular location is the plastid. It is found in the chloroplast. It carries out the reaction RNA(n) + a ribonucleoside 5'-triphosphate = RNA(n+1) + diphosphate. In terms of biological role, DNA-dependent RNA polymerase catalyzes the transcription of DNA into RNA using the four ribonucleoside triphosphates as substrates. This chain is DNA-directed RNA polymerase subunit beta', found in Guizotia abyssinica (Niger).